Consider the following 540-residue polypeptide: Sesquiterpene synthase 15b (540 aa).

Mg(2+)-binding residues include Asp-292, Asp-296, and Glu-445. A DDXXD motif motif is present at residues 292–296 (DDIYD).

It belongs to the terpene synthase family. Tpsa subfamily. The cofactor is Mg(2+). Requires Mn(2+) as cofactor.

It carries out the reaction (2E,6E)-farnesyl diphosphate = germacrene A + diphosphate. The protein operates within secondary metabolite biosynthesis; terpenoid biosynthesis. In terms of biological role, sesquiterpene synthase involved in the biosynthesis of volatile compounds. Mediates the conversion of (2E,6E)-farnesyl diphosphate (FPP) into germacrene A. In Solanum habrochaites (Wild tomato), this protein is Sesquiterpene synthase 15b.